The sequence spans 400 residues: Inositol polyphosphate 1-phosphatase (400 aa).

Aspartate 54 contributes to the Li(+) binding site. Glutamate 79 contributes to the Mg(2+) binding site. Glutamate 80 is a binding site for Li(+). Residues aspartate 153 and isoleucine 155 each coordinate Mg(2+). 1D-myo-inositol 1,4-bisphosphate contacts are provided by aspartate 156, serine 157, and threonine 158. Residues 238–257 (STRSNSEAQSQGTQNPSSEG) show a composition bias toward polar residues. The segment at 238–258 (STRSNSEAQSQGTQNPSSEGS) is disordered. 1D-myo-inositol 1,4-bisphosphate contacts are provided by serine 268, lysine 270, glycine 290, alanine 291, lysine 294, and threonine 312. Residue aspartate 317 participates in Mg(2+) binding. Phosphoserine is present on serine 318.

This sequence belongs to the inositol monophosphatase superfamily. As to quaternary structure, monomer. Mg(2+) serves as cofactor.

The catalysed reaction is 1D-myo-inositol 1,4-bisphosphate + H2O = 1D-myo-inositol 4-phosphate + phosphate. The enzyme catalyses 1D-myo-inositol 1,3,4-trisphosphate + H2O = 1D-myo-inositol 3,4-bisphosphate + phosphate. Its pathway is signal transduction; phosphatidylinositol signaling pathway. Its activity is regulated as follows. Inhibited by Li(+). Functionally, mg(2+)-dependent phosphatase that catalyzes the hydrolysis of the 1-position phosphate from inositol 1,4-bisphosphate and inositol 1,3,4-trisphosphate and participates in inositol phosphate metabolism. This chain is Inositol polyphosphate 1-phosphatase, found in Bos taurus (Bovine).